Consider the following 175-residue polypeptide: Macro domain-containing protein TTE0995 (175 aa).

The Macro domain occupies 1–174 (MKEKIKLIKG…VYSKAYEELD (174 aa)).

It belongs to the MacroD-type family.

In Caldanaerobacter subterraneus subsp. tengcongensis (strain DSM 15242 / JCM 11007 / NBRC 100824 / MB4) (Thermoanaerobacter tengcongensis), this protein is Macro domain-containing protein TTE0995.